The sequence spans 236 residues: Small ribosomal subunit protein uS2c (236 aa).

Belongs to the universal ribosomal protein uS2 family.

It is found in the plastid. The protein localises to the chloroplast. This Crucihimalaya wallichii (Rock-cress) protein is Small ribosomal subunit protein uS2c (rps2).